The primary structure comprises 402 residues: Alkaline proteinase (402 aa).

Positions 1–20 (MVTLRRLAVLLGAIPAALAA) are cleaved as a signal peptide. The propeptide occupies 21–120 (PTTQKREVVP…EQDEGEFSTA (100 aa)). The 77-residue stretch at 32–108 (KYIVTLKEGA…EVEEDQIWHL (77 aa)) folds into the Inhibitor I9 domain. The region spanning 128–402 (AWGLGTISHR…NRILYNGNGA (275 aa)) is the Peptidase S8 domain. Catalysis depends on charge relay system residues D160, H191, and S347. Residues 382–392 (GRVSNPGSGSP) show a composition bias toward polar residues. The interval 382–402 (GRVSNPGSGSPNRILYNGNGA) is disordered.

The protein belongs to the peptidase S8 family.

In Hapsidospora chrysogena (Acremonium chrysogenum), this protein is Alkaline proteinase (ALP).